The sequence spans 52 residues: ATP synthase protein 8 (52 aa).

Residues 6-26 (PLLWLNLFLMFSATFVMFIVL) traverse the membrane as a helical segment.

Belongs to the ATPase protein 8 family. In terms of assembly, F-type ATPases have 2 components, CF(1) - the catalytic core - and CF(0) - the membrane proton channel.

The protein localises to the mitochondrion membrane. Its function is as follows. Mitochondrial membrane ATP synthase (F(1)F(0) ATP synthase or Complex V) produces ATP from ADP in the presence of a proton gradient across the membrane which is generated by electron transport complexes of the respiratory chain. F-type ATPases consist of two structural domains, F(1) - containing the extramembraneous catalytic core and F(0) - containing the membrane proton channel, linked together by a central stalk and a peripheral stalk. During catalysis, ATP synthesis in the catalytic domain of F(1) is coupled via a rotary mechanism of the central stalk subunits to proton translocation. Part of the complex F(0) domain. Minor subunit located with subunit a in the membrane. This Penaeus monodon (Giant tiger prawn) protein is ATP synthase protein 8 (MT-ATP8).